A 679-amino-acid polypeptide reads, in one-letter code: MSLSKSKVKSKIKELNEKLKLYNHHYYNKNESLVSDEYYDAKLLELENIRDNFPEEYNQVFQKDFSKSVLEKVNHLDEQDVKLKKEKHQKLMLSLNKAYSFEDLERYTNRINTFVGNNHQYILQEKIDGVSISLYYENGILTKALTRGDGIYGENVTHNALNIKDIPKTINIKENIELRGEIFFSLKLFESLKNEFLDKQDGTKNKKWNTPRNKASGILKSLKTTDESSWLSCFIYEVVSPENFNLKTQKQLFDFLKIQGFNLPKFEFIENENLIENFITNFKFEDDQRDYEIDGLVIKLNDLSLYDLLGKTSKFFHHSIAYKFRKKFVMTKIEDIFVTVGRTGLITYNAKLQEVVLNGSKIKAATLHNYEYIKNIKINIGDKVYIEKAGEIIPRVVKLVSPKNDQNYFSPIEFCPSCKNKLSWSENMLNQFCLNPDCIEKKIQKLKYFVSKDGMEIQELGGKKIELFFAKGWVKKIEDIYNLKNNYDDLLKLENFQEHSVNVLLHKIEESKDVYTWKLIAALGIKNIGKKLAKSLVKIIFENDQKNLLSLLEFNYDELEKYDEFGSVKIESLKEFFANDENRNLIQFLDQNGFELKMEKEIIQSTKLENKTFLITGTLEKPRDFYKNLIIQNGGIISSSISKKLDYLIVGQNPGSKEKKAMELNIKIIDEEFLKKMLE.

NAD(+) contacts are provided by residues 36 to 40 (DEYYD) and 94 to 95 (SL). The active-site N6-AMP-lysine intermediate is the lysine 126. Positions 147, 181, 299, and 323 each coordinate NAD(+). The Zn(2+) site is built by cysteine 415, cysteine 418, cysteine 433, and cysteine 438. The 77-residue stretch at 603-679 (IQSTKLENKT…DEEFLKKMLE (77 aa)) folds into the BRCT domain.

The protein belongs to the NAD-dependent DNA ligase family. LigA subfamily. Requires Mg(2+) as cofactor. The cofactor is Mn(2+).

It carries out the reaction NAD(+) + (deoxyribonucleotide)n-3'-hydroxyl + 5'-phospho-(deoxyribonucleotide)m = (deoxyribonucleotide)n+m + AMP + beta-nicotinamide D-nucleotide.. Its function is as follows. DNA ligase that catalyzes the formation of phosphodiester linkages between 5'-phosphoryl and 3'-hydroxyl groups in double-stranded DNA using NAD as a coenzyme and as the energy source for the reaction. It is essential for DNA replication and repair of damaged DNA. In Mycoplasmopsis pulmonis (strain UAB CTIP) (Mycoplasma pulmonis), this protein is DNA ligase.